The sequence spans 309 residues: Porphobilinogen deaminase (309 aa).

Cys-242 carries the post-translational modification S-(dipyrrolylmethanemethyl)cysteine.

It belongs to the HMBS family. Monomer. Requires dipyrromethane as cofactor.

It carries out the reaction 4 porphobilinogen + H2O = hydroxymethylbilane + 4 NH4(+). It functions in the pathway porphyrin-containing compound metabolism; protoporphyrin-IX biosynthesis; coproporphyrinogen-III from 5-aminolevulinate: step 2/4. Its function is as follows. Tetrapolymerization of the monopyrrole PBG into the hydroxymethylbilane pre-uroporphyrinogen in several discrete steps. The chain is Porphobilinogen deaminase from Shewanella woodyi (strain ATCC 51908 / MS32).